Here is a 199-residue protein sequence, read N- to C-terminus: NAD(P)H dehydrogenase (quinone) (199 aa).

The Flavodoxin-like domain occupies 4-190; the sequence is VLVLYYSTYG…DGARYQGRHV (187 aa). FMN contacts are provided by residues 10–15 and 78–80; these read STYGHI and TRY. Tyr-12 is a binding site for NAD(+). Trp-98 is a binding site for substrate. FMN is bound by residues 113–119 and His-134; that span reads SSASQHG.

The protein belongs to the WrbA family. Requires FMN as cofactor.

It carries out the reaction a quinone + NADH + H(+) = a quinol + NAD(+). The catalysed reaction is a quinone + NADPH + H(+) = a quinol + NADP(+). The chain is NAD(P)H dehydrogenase (quinone) from Methylobacterium sp. (strain 4-46).